The following is a 160-amino-acid chain: Transcription elongation factor GreA (160 aa).

Residues 1 to 72 are a coiled coil; it reads MAEKTYVMTL…QIQILETKIR (72 aa).

This sequence belongs to the GreA/GreB family.

Its function is as follows. Necessary for efficient RNA polymerase transcription elongation past template-encoded arresting sites. The arresting sites in DNA have the property of trapping a certain fraction of elongating RNA polymerases that pass through, resulting in locked ternary complexes. Cleavage of the nascent transcript by cleavage factors such as GreA or GreB allows the resumption of elongation from the new 3'terminus. GreA releases sequences of 2 to 3 nucleotides. The protein is Transcription elongation factor GreA of Streptococcus thermophilus (strain ATCC BAA-491 / LMD-9).